Here is a 270-residue protein sequence, read N- to C-terminus: Phosphodiesterase YaeI (270 aa).

Residues aspartate 56, histidine 58, aspartate 88, asparagine 120, histidine 209, and histidine 211 each coordinate a divalent metal cation.

It belongs to the metallophosphoesterase superfamily. A divalent metal cation is required as a cofactor.

Shows phosphodiesterase activity, hydrolyzing phosphodiester bond in the artificial chromogenic substrate bis-p-nitrophenyl phosphate (bis-pNPP). In Escherichia coli (strain K12), this protein is Phosphodiesterase YaeI (yaeI).